Consider the following 707-residue polypeptide: Lipase maturation factor 2 (707 aa).

9 helical membrane-spanning segments follow: residues 11–31 (FLWGLSGIYLVAFVSLYAQIP), 78–98 (MEMICLLGALLSLGALLFSFL), 102–122 (LVFLLLWIFYLSLYQVGQVFL), 126–146 (WDSLLLETGFLAVLVAPVHAL), 220–240 (FSVVATYFIEIGVPLLFFLPF), 256–276 (ILIIMTGNYNFFNLLTVVLCC), 306–326 (LYSLISLLDVPIFGLLVFWTV), 358–378 (ITFPTIWIAAASLGWEILKGM), and 398–418 (VIFSCAAVAMFTISLVPYTYI). The N-linked (GlcNAc...) asparagine glycan is linked to Asn-483. A helical membrane pass occupies residues 634-654 (LLLHSFIFGIFTIYFLQAMFG). Positions 659 to 707 (PGVAKQRHSKPPNEKKKQKSNSGQGESAAAKSSGHGADTVRRNKKNEKS) are disordered. Residues 696–707 (DTVRRNKKNEKS) show a composition bias toward basic and acidic residues.

The protein belongs to the lipase maturation factor family.

The protein localises to the endoplasmic reticulum membrane. Functionally, involved in the maturation of specific proteins in the endoplasmic reticulum. The sequence is that of Lipase maturation factor 2 (lmf2) from Xenopus tropicalis (Western clawed frog).